We begin with the raw amino-acid sequence, 303 residues long: Ornithine carbamoyltransferase (303 aa).

Carbamoyl phosphate-binding positions include 52-55 (STRT), Gln-79, Arg-103, and 130-133 (HPCQ). L-ornithine-binding positions include Asn-161, Asp-222, and 226–227 (SM). Carbamoyl phosphate is bound by residues 262 to 263 (CL) and Arg-290.

This sequence belongs to the aspartate/ornithine carbamoyltransferase superfamily. OTCase family.

The protein resides in the cytoplasm. It catalyses the reaction carbamoyl phosphate + L-ornithine = L-citrulline + phosphate + H(+). It functions in the pathway amino-acid biosynthesis; L-arginine biosynthesis; L-arginine from L-ornithine and carbamoyl phosphate: step 1/3. Its function is as follows. Reversibly catalyzes the transfer of the carbamoyl group from carbamoyl phosphate (CP) to the N(epsilon) atom of ornithine (ORN) to produce L-citrulline. This chain is Ornithine carbamoyltransferase, found in Geobacter metallireducens (strain ATCC 53774 / DSM 7210 / GS-15).